The primary structure comprises 330 residues: MQNSVIEFLKPRLVDIEQITETRAKVTLEPLERGFGHTLGNALRRILLSSMPGYAITEVEIDGVLHEYSTKEGIQEDVLEILLNLKKLAIRIEGKDSVTLTLKKSGIGPVIANDILYDSNSVKIVTPNHIICHITDKNTSISMSIKVQRGRGYVPASSRFHSESDILPIGRLLLDACYSPVERISYNVEAARVEQRTDLDKLIIDMETDGTIEPEEAIRRAATILSEQLEAFIDLRDIHQPEHKEEKPEFDPILLRLVDDLELTVRSANCLKAESIHYIGDLVQRTEIELLKTPNLGKKSLTEIKDVLASRGLSLGTRLENWPPTNILDN.

An alpha N-terminal domain (alpha-NTD) region spans residues 1–236; sequence MQNSVIEFLK…EQLEAFIDLR (236 aa). Positions 250 to 330 are alpha C-terminal domain (alpha-CTD); sequence FDPILLRLVD…NWPPTNILDN (81 aa).

The protein belongs to the RNA polymerase alpha chain family. In terms of assembly, homodimer. The RNAP catalytic core consists of 2 alpha, 1 beta, 1 beta' and 1 omega subunit. When a sigma factor is associated with the core the holoenzyme is formed, which can initiate transcription.

It catalyses the reaction RNA(n) + a ribonucleoside 5'-triphosphate = RNA(n+1) + diphosphate. Functionally, DNA-dependent RNA polymerase catalyzes the transcription of DNA into RNA using the four ribonucleoside triphosphates as substrates. This is DNA-directed RNA polymerase subunit alpha from Blochmanniella pennsylvanica (strain BPEN).